The primary structure comprises 550 residues: Zinc finger protein 426 (550 aa).

One can recognise a KRAB domain in the interval 39 to 110 (VSFEDVIVDF…KIVFPEWKLQ (72 aa)). 11 consecutive C2H2-type zinc fingers follow at residues 219-241 (FECS…QRTH), 274-296 (HRCK…MRTH), 302-324 (YECK…GRTH), 330-352 (YVCS…VRSH), 358-380 (YGCK…IRTH), 386-408 (FVCV…LKLH), 414-436 (CECK…MRTH), 442-464 (YTCK…MRIH), 470-492 (YECK…ERTH), 498-522 (YECK…SHTH), and 528-550 (YKCQ…ERIH).

Its subcellular location is the nucleus. May be involved in transcriptional regulation. This is Zinc finger protein 426 (Znf426) from Mus musculus (Mouse).